We begin with the raw amino-acid sequence, 133 residues long: T-cell receptor beta chain V region 86T1 (133 aa).

The N-terminal stretch at 1–21 (MSCRLLLYVSLCLVETALMNT) is a signal peptide. A v segment region spans residues 22–113 (KITQSPRYLI…SAVYFCASSH (92 aa)). Residues Asn36 and Asn75 are each glycosylated (N-linked (GlcNAc...) asparagine). The cysteines at positions 41 and 109 are disulfide-linked. A j segment region spans residues 114–133 (GQGVSGNTLYFGEGSRLIVV).

The polypeptide is T-cell receptor beta chain V region 86T1 (Mus musculus (Mouse)).